The chain runs to 263 residues: Small ribosomal subunit protein uS3 (263 aa).

One can recognise a KH type-2 domain in the interval Val39–Arg107. Residues Gly211–Glu263 are disordered. Basic and acidic residues predominate over residues Thr219–Arg240.

The protein belongs to the universal ribosomal protein uS3 family. In terms of assembly, part of the 30S ribosomal subunit. Forms a tight complex with proteins S10 and S14.

Functionally, binds the lower part of the 30S subunit head. Binds mRNA in the 70S ribosome, positioning it for translation. The sequence is that of Small ribosomal subunit protein uS3 from Bordetella pertussis (strain Tohama I / ATCC BAA-589 / NCTC 13251).